The primary structure comprises 442 residues: 5'-deoxyadenosine deaminase (442 aa).

Zn(2+)-binding residues include His72 and His74. 2 residues coordinate substrate: Glu101 and His193. Position 220 (His220) interacts with Zn(2+). 2 residues coordinate substrate: Glu223 and Asp309. Asp309 is a binding site for Zn(2+).

It belongs to the metallo-dependent hydrolases superfamily. MTA/SAH deaminase family. In terms of assembly, homotetramer. Zn(2+) is required as a cofactor.

The enzyme catalyses 5'-deoxyadenosine + H2O + H(+) = 5'-deoxyinosine + NH4(+). It carries out the reaction S-adenosyl-L-homocysteine + H2O + H(+) = S-inosyl-L-homocysteine + NH4(+). The catalysed reaction is S-methyl-5'-thioadenosine + H2O + H(+) = S-methyl-5'-thioinosine + NH4(+). It catalyses the reaction adenosine + H2O + H(+) = inosine + NH4(+). The protein operates within amino-acid biosynthesis; S-adenosyl-L-methionine biosynthesis. Functionally, catalyzes the deamination of three SAM-derived enzymatic products, namely 5'-deoxyadenosine, S-adenosyl-L-homocysteine, and 5'-methylthioadenosine, to produce the inosine analogs. Can also deaminate adenosine. The preferred substrate for this enzyme is 5'-deoxyadenosine, but all these substrates are efficiently deaminated. Likely functions in a S-adenosyl-L-methionine (SAM) recycling pathway from S-adenosyl-L-homocysteine (SAH) produced from SAM-dependent methylation reactions. May also be involved in the recycling of 5'-deoxyadenosine, whereupon the 5'-deoxyribose moiety of 5'-deoxyinosine is further metabolized to deoxyhexoses used for the biosynthesis of aromatic amino acids in methanogens. The polypeptide is 5'-deoxyadenosine deaminase (Methanoregula boonei (strain DSM 21154 / JCM 14090 / 6A8)).